The sequence spans 215 residues: Ribonuclease T (215 aa).

The 175-residue stretch at 20 to 194 (VVIDVETAGF…YDTERTAVLF (175 aa)) folds into the Exonuclease domain. Positions 23, 25, 181, and 186 each coordinate Mg(2+). The Proton donor/acceptor role is filled by His181.

It belongs to the RNase T family. In terms of assembly, homodimer. The cofactor is Mg(2+).

Trims short 3' overhangs of a variety of RNA species, leaving a one or two nucleotide 3' overhang. Responsible for the end-turnover of tRNA: specifically removes the terminal AMP residue from uncharged tRNA (tRNA-C-C-A). Also appears to be involved in tRNA biosynthesis, especially in strains lacking other exoribonucleases. Functionally, a general regulator of small RNAs (sRNA), contributes to their degradation. Upon overexpression suppresses sRNA-mediated RhyB-silencing of multiple RNA targets; overexpression leads to nearly complete loss of RhyB sRNA. The chain is Ribonuclease T from Escherichia coli (strain K12).